The primary structure comprises 254 residues: 3-deoxy-manno-octulosonate cytidylyltransferase (254 aa).

It belongs to the KdsB family.

Its subcellular location is the cytoplasm. The enzyme catalyses 3-deoxy-alpha-D-manno-oct-2-ulosonate + CTP = CMP-3-deoxy-beta-D-manno-octulosonate + diphosphate. It functions in the pathway nucleotide-sugar biosynthesis; CMP-3-deoxy-D-manno-octulosonate biosynthesis; CMP-3-deoxy-D-manno-octulosonate from 3-deoxy-D-manno-octulosonate and CTP: step 1/1. It participates in bacterial outer membrane biogenesis; lipopolysaccharide biosynthesis. Functionally, activates KDO (a required 8-carbon sugar) for incorporation into bacterial lipopolysaccharide in Gram-negative bacteria. The polypeptide is 3-deoxy-manno-octulosonate cytidylyltransferase (Bordetella bronchiseptica (strain ATCC BAA-588 / NCTC 13252 / RB50) (Alcaligenes bronchisepticus)).